The following is a 354-amino-acid chain: Carbamoyl phosphate synthase small chain (354 aa).

The segment at 1–167 is CPSase; that stretch reads MEAVLILEDG…KEPKIHKTAN (167 aa). 3 residues coordinate L-glutamine: Ser-45, Gly-219, and Gly-221. Positions 171–354 constitute a Glutamine amidotransferase type-1 domain; it reads RCVLIDCGVK…DEMIKLKDRK (184 aa). Catalysis depends on Cys-246, which acts as the Nucleophile. Leu-247, Gln-250, Asn-288, Gly-290, and Phe-291 together coordinate L-glutamine. Active-site residues include His-330 and Glu-332.

The protein belongs to the CarA family. In terms of assembly, composed of two chains; the small (or glutamine) chain promotes the hydrolysis of glutamine to ammonia, which is used by the large (or ammonia) chain to synthesize carbamoyl phosphate. Tetramer of heterodimers (alpha,beta)4.

It catalyses the reaction hydrogencarbonate + L-glutamine + 2 ATP + H2O = carbamoyl phosphate + L-glutamate + 2 ADP + phosphate + 2 H(+). The catalysed reaction is L-glutamine + H2O = L-glutamate + NH4(+). It participates in amino-acid biosynthesis; L-arginine biosynthesis; carbamoyl phosphate from bicarbonate: step 1/1. Its pathway is pyrimidine metabolism; UMP biosynthesis via de novo pathway; (S)-dihydroorotate from bicarbonate: step 1/3. Small subunit of the glutamine-dependent carbamoyl phosphate synthetase (CPSase). CPSase catalyzes the formation of carbamoyl phosphate from the ammonia moiety of glutamine, carbonate, and phosphate donated by ATP, constituting the first step of 2 biosynthetic pathways, one leading to arginine and/or urea and the other to pyrimidine nucleotides. The small subunit (glutamine amidotransferase) binds and cleaves glutamine to supply the large subunit with the substrate ammonia. The polypeptide is Carbamoyl phosphate synthase small chain (Methanocaldococcus jannaschii (strain ATCC 43067 / DSM 2661 / JAL-1 / JCM 10045 / NBRC 100440) (Methanococcus jannaschii)).